A 380-amino-acid polypeptide reads, in one-letter code: Succinyl-diaminopimelate desuccinylase (380 aa).

H69 is a binding site for Zn(2+). The active site involves D71. D102 provides a ligand contact to Zn(2+). The Proton acceptor role is filled by E135. Residues E136, E164, and H353 each coordinate Zn(2+).

The protein belongs to the peptidase M20A family. DapE subfamily. Homodimer. Requires Zn(2+) as cofactor. Co(2+) is required as a cofactor.

The catalysed reaction is N-succinyl-(2S,6S)-2,6-diaminopimelate + H2O = (2S,6S)-2,6-diaminopimelate + succinate. The protein operates within amino-acid biosynthesis; L-lysine biosynthesis via DAP pathway; LL-2,6-diaminopimelate from (S)-tetrahydrodipicolinate (succinylase route): step 3/3. In terms of biological role, catalyzes the hydrolysis of N-succinyl-L,L-diaminopimelic acid (SDAP), forming succinate and LL-2,6-diaminopimelate (DAP), an intermediate involved in the bacterial biosynthesis of lysine and meso-diaminopimelic acid, an essential component of bacterial cell walls. This is Succinyl-diaminopimelate desuccinylase from Cereibacter sphaeroides (strain ATCC 17029 / ATH 2.4.9) (Rhodobacter sphaeroides).